We begin with the raw amino-acid sequence, 769 residues long: MMDQARSAFSTLFGGEPLSYTRFSLARQVDGDNSHVEMKLAADEEENVDNNMRDNGASVTKPKRFNGFICYGTIAIILFFLIGFMIGYLGYCKRVEAKSECERPAGTESLEVEGTEPSETEEYFPEAPSHLFWSDLKTMLSEKLSNTEFTSTIRQLNENSYFPREAGSQKDESLAFFIENRFRELQLSKAWHDEHFVKVQVKGSASNSVTIVGTNSGMVYLVESPEGYVAYSKAATVTGRLVHANFGTKKDFENLNSPVNGSLVIVRAGKITFAEKVANAESFNAIGVLIYMDQAKFPITNAEIPFFGHAHLGTGDPYTPGFPSFNHTQFPPSQSSGLPNIPVQTISRANAEKLFGNMEGDCPSAWETDSSCRLETSRNWNVKLSVNNVLKEIRIFNVFGVIKGFEEPDHYVVVGAQRDAWGPGAAKSSVGTALLLELARILSDMVLKGGFKPSRSIVFASWSAGDFGAVGATEWLEGYLSSLHLKAFTYINLDKAVLGTSNFKVSASPLLYSLIEKVMKDVKHPVTGQSLYRDSNWINKVEKFSLDNAAFPFLAYSGIPAVSFCFCEDTDYPYLGTTMDVYEKLIQKVPQLNKMARAAAEVAGQLIMKLTYDLELNLNYEMYNDKILSFVRDVSRFRADIKEMGLNLQWLYSARGDFFRATSRLTTDYRNAERTNRFIMRDINDRIMRVEYHFLSPYVSPRESPFRHIFWGTGSHTLSALLEHLKLRQENISAFNETLFRNQLALTTWTIQGAANALSGDIWDIDNEF.

Over 1–70 the chain is Cytoplasmic; that stretch reads MMDQARSAFS…KPKRFNGFIC (70 aa). Positions 1–70 are mediates interaction with SH3BP4; the sequence is MMDQARSAFS…KPKRFNGFIC (70 aa). 2 positions are modified to phosphoserine: Ser-10 and Ser-19. Residue Tyr-20 is modified to Phosphotyrosine. The short motif at 20-23 is the Endocytosis signal element; sequence YTRF. Thr-21 bears the Phosphothreonine mark. Ser-24 carries the phosphoserine modification. Residues 61-64 carry the Stop-transfer sequence motif; that stretch reads KPKR. Residue Cys-70 is the site of S-palmitoyl cysteine attachment. A helical; Signal-anchor for type II membrane protein membrane pass occupies residues 71–91; that stretch reads YGTIAIILFFLIGFMIGYLGY. At 92-769 the chain is on the extracellular side; it reads CKRVEAKSEC…GDIWDIDNEF (678 aa). Thr-107 carries O-linked (GalNAc...) threonine glycosylation. The region spanning 232 to 322 is the PA domain; sequence SKAATVTGRL…GTGDPYTPGF (91 aa). Residues Asn-260 and Asn-326 are each glycosylated (N-linked (GlcNAc...) asparagine). The tract at residues 578–769 is ligand-binding; it reads TMDVYEKLIQ…GDIWDIDNEF (192 aa). Positions 655 to 657 match the Cell attachment site motif; the sequence is RGD. Asn-731 and Asn-736 each carry an N-linked (GlcNAc...) asparagine glycan.

Belongs to the peptidase M28 family. M28B subfamily. As to quaternary structure, homodimer; disulfide-linked. Binds one transferrin molecule per subunit. Interacts with SH3BP4. Homodimer; disulfide-linked. Binds one transferrin or HFE molecule per subunit. Binds the HLA class II histocompatibility antigen, DR1. Interacts with SH3BP3. Interacts with STEAP3; facilitates TFRC endocytosis in erythroid precursor cells. Post-translationally, stearoylated by ZDHHC6 which inhibits TFRC-mediated activation of the JNK pathway and promotes mitochondrial fragmentation. Stearoylation does not affect iron uptake. In terms of processing, N- and O-glycosylated, phosphorylated and palmitoylated.

The protein resides in the cell membrane. It localises to the melanosome. Cellular uptake of iron occurs via receptor-mediated endocytosis of ligand-occupied transferrin receptor into specialized endosomes. Endosomal acidification leads to iron release. The apotransferrin-receptor complex is then recycled to the cell surface with a return to neutral pH and the concomitant loss of affinity of apotransferrin for its receptor. Transferrin receptor is necessary for development of erythrocytes and the nervous system. Positively regulates T and B cell proliferation through iron uptake. Acts as a lipid sensor that regulates mitochondrial fusion by regulating activation of the JNK pathway. When dietary levels of stearate (C18:0) are low, promotes activation of the JNK pathway, resulting in HUWE1-mediated ubiquitination and subsequent degradation of the mitofusin MFN2 and inhibition of mitochondrial fusion. When dietary levels of stearate (C18:0) are high, TFRC stearoylation inhibits activation of the JNK pathway and thus degradation of the mitofusin MFN2. Mediates uptake of NICOL1 into fibroblasts where it may regulate extracellular matrix production. The protein is Transferrin receptor protein 1 (TFRC) of Felis catus (Cat).